The primary structure comprises 84 residues: Putative membrane protein insertion efficiency factor (84 aa).

Belongs to the UPF0161 family.

The protein resides in the cell membrane. Its function is as follows. Could be involved in insertion of integral membrane proteins into the membrane. This is Putative membrane protein insertion efficiency factor from Staphylococcus carnosus (strain TM300).